A 673-amino-acid polypeptide reads, in one-letter code: DNA ligase (673 aa).

Residues 35 to 39 (DADYD), 84 to 85 (SL), and E115 contribute to the NAD(+) site. K117 serves as the catalytic N6-AMP-lysine intermediate. Positions 138, 180, 296, and 320 each coordinate NAD(+). Zn(2+) contacts are provided by C415, C418, C433, and C438. The BRCT domain occupies 595–673 (ERGTALAGQT…EDALKKLLGK (79 aa)).

Belongs to the NAD-dependent DNA ligase family. LigA subfamily. The cofactor is Mg(2+). It depends on Mn(2+) as a cofactor.

It carries out the reaction NAD(+) + (deoxyribonucleotide)n-3'-hydroxyl + 5'-phospho-(deoxyribonucleotide)m = (deoxyribonucleotide)n+m + AMP + beta-nicotinamide D-nucleotide.. In terms of biological role, DNA ligase that catalyzes the formation of phosphodiester linkages between 5'-phosphoryl and 3'-hydroxyl groups in double-stranded DNA using NAD as a coenzyme and as the energy source for the reaction. It is essential for DNA replication and repair of damaged DNA. The protein is DNA ligase of Koribacter versatilis (strain Ellin345).